The primary structure comprises 817 residues: Probable beta-glucosidase G (817 aa).

Positions 1–20 are cleaved as a signal peptide; that stretch reads MASIAHLIFSGLLAATVANS. Asn40, Asn58, Asn229, and Asn276 each carry an N-linked (GlcNAc...) asparagine glycan. Asp304 is a catalytic residue. Asn343, Asn350, Asn402, Asn507, Asn563, Asn584, Asn623, Asn662, Asn679, and Asn715 each carry an N-linked (GlcNAc...) asparagine glycan.

It belongs to the glycosyl hydrolase 3 family.

The protein localises to the secreted. The enzyme catalyses Hydrolysis of terminal, non-reducing beta-D-glucosyl residues with release of beta-D-glucose.. It functions in the pathway glycan metabolism; cellulose degradation. In terms of biological role, beta-glucosidases are one of a number of cellulolytic enzymes involved in the degradation of cellulosic biomass. Catalyzes the last step releasing glucose from the inhibitory cellobiose. The chain is Probable beta-glucosidase G (bglG) from Neosartorya fischeri (strain ATCC 1020 / DSM 3700 / CBS 544.65 / FGSC A1164 / JCM 1740 / NRRL 181 / WB 181) (Aspergillus fischerianus).